Consider the following 230-residue polypeptide: Protein CbbY (230 aa).

Residue Asp-8 is the Nucleophile of the active site. Residues Asp-8 and Asp-10 each coordinate Mg(2+). Asp-8 is a substrate binding site. Residue Asp-10 is the Proton donor of the active site. Substrate contacts are provided by residues Glu-17, 50-54 (GGKER), 75-78 (HRAK), and 115-121 (TTTSLPN). Asp-176 is a Mg(2+) binding site.

This sequence belongs to the HAD-like hydrolase superfamily. CbbY/CbbZ/Gph/YieH family. Mg(2+) is required as a cofactor.

It carries out the reaction D-xylulose 1,5-bisphosphate + H2O = D-xylulose 5-phosphate + phosphate. Its function is as follows. Highly selective xylulose-1,5-bisphosphate (XuBP) phosphatase. Also shows activity towards ribulose-1,5-bisphosphate (RuBP) and fructose-1,6-bisphosphate (FBP), but not towards fructose-6-phosphate (F6P) or ribulose-5-phosphate (Ru5P). Degrades xylulose-1,5-bisphosphate, a potent inhibitor of rubisco produced by the rubisco itself. In Cereibacter sphaeroides (Rhodobacter sphaeroides), this protein is Protein CbbY.